The primary structure comprises 178 residues: MNPRLACSTWLPLLLVLFTLDQGRANPVERGQEYRSLSKRFDDDSTELILEPRASEENGPPYQPLVPRASDENVPPAYVPLVPRASDENVPPPPLQMPLIPRASEQKGPPFNPPPFVDYEPRAANENALRKLIKRSFERSPGRNKRLSPGDGCFGQKIDRIGAVSGMGCNSVSSQGKK.

Positions 1 to 25 (MNPRLACSTWLPLLLVLFTLDQGRA) are cleaved as a signal peptide. 5 consecutive propeptides follow at residues 26 to 58 (NPVE…SEEN), 69 to 73 (ASDEN), 85 to 89 (ASDEN), 103 to 112 (ASEQKGPPFN), and 123 to 146 (AANE…RNKR). Disordered regions lie at residues 69-107 (ASDE…SEQK) and 135-155 (RSFE…GCFG). A disulfide bond links cysteine 153 and cysteine 169.

It in the C-terminal section; belongs to the natriuretic peptide family. Expressed by the venom gland.

It localises to the secreted. Its function is as follows. Helokinestatins antagonize the vasodilatory actions of bradykinin at the B2 bradykinin receptor (BDKRB2), with helokinestatin-1 being the most potent antagonist. In terms of biological role, exhibits hypotensive and vasodepressor activities, possibly by targeting natriuretic peptide receptors NPR1 and NPR2. In Heloderma suspectum cinctum (Banded Gila monster), this protein is Natriuretic and helokinestatin peptides.